A 401-amino-acid chain; its full sequence is Short chain dehydrogenase/reductase dpchH (401 aa).

N-linked (GlcNAc...) asparagine glycosylation occurs at N16. The chain crosses the membrane as a helical span at residues 51–71; the sequence is VRAVDVLFGTFLYVPLGILFL. Residues 72 to 80, 99 to 100, and 118 to 120 contribute to the NAD(+) site; these read KKSLSGFGD, TG, and AKV. N242 is a glycosylation site (N-linked (GlcNAc...) asparagine). The active-site Proton acceptor is Y275. NAD(+) contacts are provided by residues 275 to 279 and 308 to 310; these read YGTSK and GTI. A glycan (N-linked (GlcNAc...) asparagine) is linked at N386.

It localises to the membrane. The protein operates within secondary metabolite biosynthesis; terpenoid biosynthesis. Its function is as follows. Short chain dehydrogenase/reductase; part of the gene cluster that mediates the biosynthesis of the diterpenoid pyrones higginsianins A and B. The first step of the pathway is the synthesis of the alpha-pyrone moiety by the polyketide synthase dpchA via condensation of one acetyl-CoA starter unit with 3 malonyl-CoA units and 2 methylations. The alpha-pyrone is then combined with geranylgeranyl pyrophosphate (GGPP) formed by the GGPP synthase dpchD through the action of the prenyltransferase dpchC to yield a linear alpha-pyrone diterpenoid. Subsequent steps in the diterpenoid pyrone biosynthetic pathway involve the decalin core formation, which is initiated by the epoxidation of the C10-C11 olefin by the FAD-dependent oxidoreductase dpchE, and is followed by a cyclization cascade catalyzed by the terpene cyclase dpchB. The short chain dehydrogenase/reductase dpchG then oxidizes the 8S hydroxy group to a ketone and the short chain dehydrogenase/reductase dpchH reduces the ketone to the 8R hydroxy group to yield higginsianin B. Finally, the FAD-dependent oxidoreductase dpchF converts higginsianin B into higginsianin A. This chain is Short chain dehydrogenase/reductase dpchH, found in Colletotrichum higginsianum (strain IMI 349063) (Crucifer anthracnose fungus).